A 2462-amino-acid polypeptide reads, in one-letter code: Non-reducing polyketide synthase ausA (2462 aa).

Residues 16–253 form an N-terminal acylcarrier protein transacylase domain (SAT) region; that stretch reads VFFGPVYPEL…HTADHIPAMK (238 aa). The Ketosynthase family 3 (KS3) domain maps to 385-801; sequence SAPIAVTGFA…GSNAVIVVKE (417 aa). Active-site for beta-ketoacyl synthase activity residues include C550, H685, and H724. Residues 904–1208 form a malonyl-CoA:ACP transacylase (MAT) domain region; the sequence is LCFGGQTGDT…LPIDLQESTA (305 aa). S991 acts as the For acyl/malonyl transferase activity in catalysis. Residues 1274–1403 form an N-terminal hotdog fold region; it reads HDDGLLQLVE…GKVLLDPQAA (130 aa). The PKS/mFAS DH domain occupies 1274 to 1581; it reads HDDGLLQLVE…FTSVSIQSLK (308 aa). The interval 1277 to 1580 is product template (PT) domain; it reads GLLQLVERDA…TFTSVSIQSL (304 aa). Residue H1307 is the Proton acceptor; for dehydratase activity of the active site. Positions 1431–1581 are C-terminal hotdog fold; that stretch reads SSNGLKRATV…FTSVSIQSLK (151 aa). D1489 functions as the Proton donor; for dehydratase activity in the catalytic mechanism. A Carrier domain is found at 1613 to 1690; sequence VSDDHHLRAV…GLAHRISPSS (78 aa). S1650 is subject to O-(pantetheine 4'-phosphoryl)serine. Residues 1850-2083 are methyltransferase (CMeT) domain; it reads QHASEHKLLR…GFNWVDWTDN (234 aa). A thioesterase (TE) domain region spans residues 2112-2462; it reads TPARVETVRY…YEFLRQHVAV (351 aa). Active-site for thioesterase activity residues include S2235, D2398, and H2430.

It carries out the reaction 3 malonyl-CoA + acetyl-CoA + 2 S-adenosyl-L-methionine = 3,5-dimethylorsellinate + 2 S-adenosyl-L-homocysteine + 3 CO2 + 4 CoA. The protein operates within secondary metabolite biosynthesis; terpenoid biosynthesis. Functionally, non-reducing polyketide synthase; part of the gene cluster that mediates the biosynthesis of calidodehydroaustin, a fungal meroterpenoid. The first step of the pathway is the synthesis of 3,5-dimethylorsellinic acid by the polyketide synthase ausA. 3,5-dimethylorsellinic acid is then prenylated by the polyprenyl transferase ausN. Further epoxidation by the FAD-dependent monooxygenase ausM and cyclization by the probable terpene cyclase ausL lead to the formation of protoaustinoid A. Protoaustinoid A is then oxidized to spiro-lactone preaustinoid A3 by the combined action of the FAD-binding monooxygenases ausB and ausC, and the dioxygenase ausE. Acid-catalyzed keto-rearrangement and ring contraction of the tetraketide portion of preaustinoid A3 by ausJ lead to the formation of preaustinoid A4. The aldo-keto reductase ausK, with the help of ausH, is involved in the next step by transforming preaustinoid A4 into isoaustinone which is in turn hydroxylated by the P450 monooxygenase ausI to form austinolide. The cytochrome P450 monooxygenase ausG modifies austinolide to austinol. Austinol is further acetylated to austin by the O-acetyltransferase ausP, which spontaneously changes to dehydroaustin. The cytochrome P450 monooxygenase ausR then converts dehydroaustin is into 7-dehydrodehydroaustin. The hydroxylation catalyzed by ausR permits the O-acetyltransferase ausQ to add an additional acetyl group to the molecule, leading to the formation of acetoxydehydroaustin. The short chain dehydrogenase ausT catalyzes the reduction of the double bond present between carbon atoms 1 and 2 to convert 7-dehydrodehydroaustin into 1,2-dihydro-7-hydroxydehydroaustin. AusQ catalyzes not only an acetylation reaction but also the addition of the PKS ausV diketide product to 1,2-dihydro-7-hydroxydehydroaustin, forming precalidodehydroaustin. Finally, the iron/alpha-ketoglutarate-dependent dioxygenase converts precalidodehydroaustin into calidodehydroaustin. This chain is Non-reducing polyketide synthase ausA, found in Aspergillus calidoustus.